We begin with the raw amino-acid sequence, 218 residues long: Phosphoenolpyruvate guanylyltransferase (218 aa).

3 residues coordinate phosphoenolpyruvate: Thr-151, Gly-166, and Ser-169.

The protein belongs to the CofC family.

It catalyses the reaction phosphoenolpyruvate + GTP + H(+) = enolpyruvoyl-2-diphospho-5'-guanosine + diphosphate. It participates in cofactor biosynthesis; coenzyme F420 biosynthesis. Its function is as follows. Guanylyltransferase that catalyzes the activation of phosphoenolpyruvate (PEP) as enolpyruvoyl-2-diphospho-5'-guanosine, via the condensation of PEP with GTP. It is involved in the biosynthesis of coenzyme F420, a hydride carrier cofactor. This chain is Phosphoenolpyruvate guanylyltransferase, found in Mycobacterium sp. (strain KMS).